We begin with the raw amino-acid sequence, 238 residues long: 2-C-methyl-D-erythritol 4-phosphate cytidylyltransferase (238 aa).

Belongs to the IspD/TarI cytidylyltransferase family. IspD subfamily.

It catalyses the reaction 2-C-methyl-D-erythritol 4-phosphate + CTP + H(+) = 4-CDP-2-C-methyl-D-erythritol + diphosphate. It participates in isoprenoid biosynthesis; isopentenyl diphosphate biosynthesis via DXP pathway; isopentenyl diphosphate from 1-deoxy-D-xylulose 5-phosphate: step 2/6. Catalyzes the formation of 4-diphosphocytidyl-2-C-methyl-D-erythritol from CTP and 2-C-methyl-D-erythritol 4-phosphate (MEP). This is 2-C-methyl-D-erythritol 4-phosphate cytidylyltransferase from Alteromonas mediterranea (strain DSM 17117 / CIP 110805 / LMG 28347 / Deep ecotype).